We begin with the raw amino-acid sequence, 114 residues long: Fluoride-specific ion channel FluC 2 (114 aa).

Transmembrane regions (helical) follow at residues 3 to 23, 31 to 51, 57 to 77, and 92 to 112; these read YVII…ECWL, LMTA…WILA, GIEL…TFCM, and MIYL…GWNV. 2 residues coordinate Na(+): G67 and T70.

The protein belongs to the fluoride channel Fluc/FEX (TC 1.A.43) family.

It localises to the cell membrane. It carries out the reaction fluoride(in) = fluoride(out). Its activity is regulated as follows. Na(+) is not transported, but it plays an essential structural role and its presence is essential for fluoride channel function. Its function is as follows. Fluoride-specific ion channel. Important for reducing fluoride concentration in the cell, thus reducing its toxicity. In Shouchella clausii (strain KSM-K16) (Alkalihalobacillus clausii), this protein is Fluoride-specific ion channel FluC 2.